The primary structure comprises 275 residues: Probable aquaporin NIP7-1 (275 aa).

Basic and acidic residues predominate over residues 1–11 (MNGEARSRVVD). Residues 1-26 (MNGEARSRVVDQEAGSTPSTLRDEDH) form a disordered region. The next 2 helical transmembrane spans lie at 47 to 67 (IVMA…GVIS) and 76 to 96 (VGLL…VYSI). Positions 105–107 (NPS) match the NPA 1 motif. Helical transmembrane passes span 127–147 (ITAQ…VYGV), 161–181 (VSAF…ASAL), and 192–212 (LTGF…GPIS). Residues 217–219 (NPA) carry the NPA 2 motif. Residues 231–251 (FEDLWIYMTAPVIGAIIGVLT) traverse the membrane as a helical segment. Residue Ser272 is modified to Phosphoserine.

Belongs to the MIP/aquaporin (TC 1.A.8) family. NIP (TC 1.A.8.12) subfamily. Expressed in floral buds.

It localises to the membrane. In terms of biological role, aquaporins facilitate the transport of water and small neutral solutes across cell membranes. In Arabidopsis thaliana (Mouse-ear cress), this protein is Probable aquaporin NIP7-1 (NIP7-1).